A 180-amino-acid polypeptide reads, in one-letter code: UPF0227 protein YE1706 (180 aa).

Belongs to the UPF0227 family.

The polypeptide is UPF0227 protein YE1706 (Yersinia enterocolitica serotype O:8 / biotype 1B (strain NCTC 13174 / 8081)).